Here is a 201-residue protein sequence, read N- to C-terminus: Ribosome maturation factor RimP (201 aa).

The protein belongs to the RimP family.

It localises to the cytoplasm. In terms of biological role, required for maturation of 30S ribosomal subunits. The polypeptide is Ribosome maturation factor RimP (Acidobacterium capsulatum (strain ATCC 51196 / DSM 11244 / BCRC 80197 / JCM 7670 / NBRC 15755 / NCIMB 13165 / 161)).